A 64-amino-acid polypeptide reads, in one-letter code: Large ribosomal subunit protein bL28 (64 aa).

It belongs to the bacterial ribosomal protein bL28 family.

The chain is Large ribosomal subunit protein bL28 from Bifidobacterium longum (strain NCC 2705).